The primary structure comprises 175 residues: ATP synthase subunit b (175 aa).

Residues 19–39 (LVVGTIAFALLVFVLLKFVMP) traverse the membrane as a helical segment.

Belongs to the ATPase B chain family. In terms of assembly, F-type ATPases have 2 components, F(1) - the catalytic core - and F(0) - the membrane proton channel. F(1) has five subunits: alpha(3), beta(3), gamma(1), delta(1), epsilon(1). F(0) has three main subunits: a(1), b(2) and c(10-14). The alpha and beta chains form an alternating ring which encloses part of the gamma chain. F(1) is attached to F(0) by a central stalk formed by the gamma and epsilon chains, while a peripheral stalk is formed by the delta and b chains.

The protein localises to the cell membrane. F(1)F(0) ATP synthase produces ATP from ADP in the presence of a proton or sodium gradient. F-type ATPases consist of two structural domains, F(1) containing the extramembraneous catalytic core and F(0) containing the membrane proton channel, linked together by a central stalk and a peripheral stalk. During catalysis, ATP synthesis in the catalytic domain of F(1) is coupled via a rotary mechanism of the central stalk subunits to proton translocation. In terms of biological role, component of the F(0) channel, it forms part of the peripheral stalk, linking F(1) to F(0). This is ATP synthase subunit b from Salinispora tropica (strain ATCC BAA-916 / DSM 44818 / JCM 13857 / NBRC 105044 / CNB-440).